Consider the following 69-residue polypeptide: Sodium channel toxin (69 aa).

The LCN-type CS-alpha/beta domain maps to 2–66 (KNDYPVDTAK…SPTKTSGRCN (65 aa)). 4 cysteine pairs are disulfide-bonded: Cys-14–Cys-65, Cys-18–Cys-41, Cys-27–Cys-48, and Cys-31–Cys-50.

This sequence belongs to the long (4 C-C) scorpion toxin superfamily. Sodium channel inhibitor family. As to expression, expressed by the venom gland.

Its subcellular location is the secreted. In terms of biological role, inhibits voltage-gated sodium channels (Nav). This is Sodium channel toxin from Tityus metuendus (Scorpion).